A 324-amino-acid chain; its full sequence is Heat-inducible transcription repressor HrcA (324 aa).

Belongs to the HrcA family.

In terms of biological role, negative regulator of class I heat shock genes (grpE-dnaK-dnaJ and groELS operons). Prevents heat-shock induction of these operons. This is Heat-inducible transcription repressor HrcA from Synechococcus sp. (strain CC9902).